A 455-amino-acid polypeptide reads, in one-letter code: F-box/LRR-repeat protein At5g35995 (455 aa).

An F-box domain is found at 4–51 (RDFISSLPDEVLGKKILSLLPTKLVVSTSVLSKRWRNLFHFVDSFDLE). LRR repeat units follow at residues 114 to 138 (DHYL…SYRT), 152 to 176 (FPAL…LISG), 282 to 305 (IRNV…CYTM), 308 to 324 (FDKL…ENGW), and 325 to 348 (QALP…LLHK).

This Arabidopsis thaliana (Mouse-ear cress) protein is F-box/LRR-repeat protein At5g35995.